We begin with the raw amino-acid sequence, 474 residues long: Protein Rv3254 (474 aa).

Residues 1-4 constitute a propeptide that is removed on maturation; sequence MTGR.

This Mycobacterium tuberculosis (strain ATCC 25618 / H37Rv) protein is Protein Rv3254.